Reading from the N-terminus, the 1162-residue chain is DNA-directed RNA polymerase subunit beta 1 (1162 aa).

Belongs to the RNA polymerase beta chain family. The RNAP catalytic core consists of 2 alpha, 1 beta, 1 beta' and 1 omega subunit. When a sigma factor is associated with the core the holoenzyme is formed, which can initiate transcription.

The enzyme catalyses RNA(n) + a ribonucleoside 5'-triphosphate = RNA(n+1) + diphosphate. Its function is as follows. DNA-dependent RNA polymerase catalyzes the transcription of DNA into RNA using the four ribonucleoside triphosphates as substrates. This chain is DNA-directed RNA polymerase subunit beta 1, found in Nocardia farcinica (strain IFM 10152).